A 595-amino-acid polypeptide reads, in one-letter code: MKGLRGHNKKSFWGNTRLSDLLWPVTLLPGLISAYQPVYLGSRQSSPFLPPQIPLGDSPPLSDTHEFTLRHIFHRGTYQDPDLHRRLDITPDTRLRAVSDAGIESDVVTPNTPLVASSQPLIIERLADRRLSVIEEHLVTARSSGSAVALSPSDWVMDTLPGPNVTEKKTVVALAMMTANDYIEVPGTGDWQDIHGRFNHSGSFGWQGDGLRGHVYADKTNSTVVISLKGTSPALFDGEGTTTNDKINDNLFFSCCCGQGGSYLWRQVCDCQTTLYNANLTCIVEAMLDENRYYRASLDLYSNITEMYPNANVWLTGHSLGGAVSSLLGLTFGVPVVTFEAVPEALPAARLGLPSPPGHDSRYPQSRRNTGSYHFGHTADPVYMGTCNGVSSVCTWGGYAMESACHTGQMCVYDTVEDKGWRVGLSKHRINYVIANVLAGYDDVPPCAPEEECYDCELWKFFRSNGSEITTTTSATSTSTSTTTSRTSTCKTPGWWGCLDQTTTTETTSTSTSTSTCKTPGWFGCKDPTTTSDITSVPTITTTEPPMTSTTTCKTPGWFGCKDETTTQVIAPAATLTITEPPVTSTTTGKHLGRF.

Residues 1 to 20 (MKGLRGHNKKSFWGNTRLSD) are Cytoplasmic-facing. The chain crosses the membrane as a helical; Signal-anchor for type II membrane protein span at residues 21 to 41 (LLWPVTLLPGLISAYQPVYLG). The Lumenal segment spans residues 42-595 (SRQSSPFLPP…TTTGKHLGRF (554 aa)). 5 N-linked (GlcNAc...) asparagine glycosylation sites follow: asparagine 164, asparagine 199, asparagine 221, asparagine 279, and asparagine 303. Serine 319 (charge relay system) is an active-site residue. N-linked (GlcNAc...) asparagine glycosylation occurs at asparagine 465.

It belongs to the AB hydrolase superfamily. Lipase family. As to quaternary structure, binds to both phosphatidylinositol (PI) and phosphatidylinositol 3,5-bisphosphate (PIP2).

Its subcellular location is the endosome. The protein resides in the multivesicular body membrane. The protein localises to the prevacuolar compartment membrane. It catalyses the reaction a triacylglycerol + H2O = a diacylglycerol + a fatty acid + H(+). Its function is as follows. Lipase which is essential for lysis of subvacuolar cytoplasm to vacuole targeted bodies and intravacuolar autophagic bodies. Involved in the lysis of intravacuolar multivesicular body (MVB) vesicles. The intravacuolar membrane disintegration by atg15 is critical to life span extension. In Aspergillus niger (strain ATCC MYA-4892 / CBS 513.88 / FGSC A1513), this protein is Putative lipase atg15 (atg15).